The primary structure comprises 285 residues: Eukaryotic translation initiation factor 3 subunit F-2 (285 aa).

An MPN domain is found at 11–145 (VLIKPLVLFQ…TRLYCAVEIG (135 aa)).

This sequence belongs to the eIF-3 subunit F family. In terms of assembly, component of the eukaryotic translation initiation factor 3 (eIF-3) complex. The eIF-3 complex interacts with pix.

It localises to the cytoplasm. Functionally, component of the eukaryotic translation initiation factor 3 (eIF-3) complex, which is involved in protein synthesis of a specialized repertoire of mRNAs and, together with other initiation factors, stimulates binding of mRNA and methionyl-tRNAi to the 40S ribosome. The eIF-3 complex specifically targets and initiates translation of a subset of mRNAs involved in cell proliferation. This Drosophila erecta (Fruit fly) protein is Eukaryotic translation initiation factor 3 subunit F-2.